The primary structure comprises 238 residues: Octanoyltransferase (238 aa).

The region spanning 40-220 (AGGSDALLLL…RVCDALDGRL (181 aa)) is the BPL/LPL catalytic domain. Substrate contacts are provided by residues 78-85 (RGGKITWH), 150-152 (AIG), and 163-165 (GFA). Residue cysteine 181 is the Acyl-thioester intermediate of the active site.

This sequence belongs to the LipB family.

It is found in the cytoplasm. The enzyme catalyses octanoyl-[ACP] + L-lysyl-[protein] = N(6)-octanoyl-L-lysyl-[protein] + holo-[ACP] + H(+). It participates in protein modification; protein lipoylation via endogenous pathway; protein N(6)-(lipoyl)lysine from octanoyl-[acyl-carrier-protein]: step 1/2. Catalyzes the transfer of endogenously produced octanoic acid from octanoyl-acyl-carrier-protein onto the lipoyl domains of lipoate-dependent enzymes. Lipoyl-ACP can also act as a substrate although octanoyl-ACP is likely to be the physiological substrate. This Mycobacterium sp. (strain JLS) protein is Octanoyltransferase.